The sequence spans 57 residues: MSKTVVRKNESLEDALRRFKRTVSKSGTIQEVRKREFYEKPSVKRKKKSEAARKRKW.

Belongs to the bacterial ribosomal protein bS21 family.

The polypeptide is Small ribosomal subunit protein bS21 (Lysinibacillus sphaericus (strain C3-41)).